Consider the following 31-residue polypeptide: Cytochrome b6-f complex subunit 6 (31 aa).

A helical membrane pass occupies residues 3–23; it reads IAIDYFLLVGFCFAFTSGLYL.

The protein belongs to the PetL family. In terms of assembly, the 4 large subunits of the cytochrome b6-f complex are cytochrome b6, subunit IV (17 kDa polypeptide, PetD), cytochrome f and the Rieske protein, while the 4 small subunits are PetG, PetL, PetM and PetN. The complex functions as a dimer.

Its subcellular location is the plastid. It is found in the chloroplast thylakoid membrane. Functionally, component of the cytochrome b6-f complex, which mediates electron transfer between photosystem II (PSII) and photosystem I (PSI), cyclic electron flow around PSI, and state transitions. PetL is important for photoautotrophic growth as well as for electron transfer efficiency and stability of the cytochrome b6-f complex. The sequence is that of Cytochrome b6-f complex subunit 6 from Trieres chinensis (Marine centric diatom).